We begin with the raw amino-acid sequence, 321 residues long: Bifunctional methyltransferase/endonuclease (321 aa).

Residues 1 to 86 (MLSVDYENFD…PLGSAEKMRR (86 aa)) form a probable methylated-DNA--protein-cysteine methyltransferase region. The active site involves C61. The tract at residues 87 to 318 (LIRDGITITN…YDFSTRNTAI (232 aa)) is endonuclease V. Residues D145 and D204 each contribute to the Mg(2+) site.

This sequence in the N-terminal section; belongs to the MGMT family. The protein in the C-terminal section; belongs to the endonuclease V family. It depends on Mg(2+) as a cofactor.

It is found in the cytoplasm. It carries out the reaction Endonucleolytic cleavage at apurinic or apyrimidinic sites to products with a 5'-phosphate.. Its function is as follows. DNA repair enzyme involved in the repair of deaminated bases. Selectively cleaves double-stranded DNA at the second phosphodiester bond 3' to a deoxyinosine leaving behind the intact lesion on the nicked DNA. This Thermoplasma volcanium (strain ATCC 51530 / DSM 4299 / JCM 9571 / NBRC 15438 / GSS1) protein is Bifunctional methyltransferase/endonuclease.